The primary structure comprises 174 residues: Probable NAD(P)H dehydrogenase subunit CRR3, chloroplastic (174 aa).

A chloroplast-targeting transit peptide spans 1 to 54 (MAVLSTIYSITRASTPTMASLTNDSPSPLPSSSPSKLPSPTSPSKKPLKLRQVS). Positions 14-24 (STPTMASLTND) are enriched in polar residues. Positions 14–71 (STPTMASLTNDSPSPLPSSSPSKLPSPTSPSKKPLKLRQVSKQMGSQNQQRRGNKPSI) are disordered. Over residues 30–45 (PSSSPSKLPSPTSPSK) the composition is skewed to low complexity. The segment covering 53-64 (VSKQMGSQNQQR) has biased composition (polar residues). A helical membrane pass occupies residues 140-160 (FTIQWILPIWIMSLLVACGVI).

It localises to the plastid. Its subcellular location is the chloroplast thylakoid membrane. Functionally, probable subunit of the chloroplast NAD(P)H dehydrogenase (NDH) complex of the photosynthetic electron transport chain. Required for both formation and activity of NDH. May function in assembly or stabilization of the NDH complex. The polypeptide is Probable NAD(P)H dehydrogenase subunit CRR3, chloroplastic (Arabidopsis thaliana (Mouse-ear cress)).